Consider the following 180-residue polypeptide: Small ribosomal subunit protein uS4 (180 aa).

One can recognise an S4 RNA-binding domain in the interval 104–166 (RRLQTIVHRK…PTSPFKNNPP (63 aa)). A disordered region spans residues 155–180 (FYPTSPFKNNPPTAGQGEVNVEQKGN).

Belongs to the universal ribosomal protein uS4 family. Part of the 30S ribosomal subunit. Contacts protein S5. The interaction surface between S4 and S5 is involved in control of translational fidelity.

One of the primary rRNA binding proteins, it binds directly to 16S rRNA where it nucleates assembly of the body of the 30S subunit. In terms of biological role, with S5 and S12 plays an important role in translational accuracy. The sequence is that of Small ribosomal subunit protein uS4 from Metallosphaera sedula (strain ATCC 51363 / DSM 5348 / JCM 9185 / NBRC 15509 / TH2).